A 444-amino-acid chain; its full sequence is Xylose isomerase (444 aa).

Catalysis depends on residues histidine 101 and aspartate 104. Positions 232, 268, 271, 296, 307, 309, and 339 each coordinate Mg(2+).

The protein belongs to the xylose isomerase family. In terms of assembly, homotetramer. Mg(2+) serves as cofactor.

Its subcellular location is the cytoplasm. The enzyme catalyses alpha-D-xylose = alpha-D-xylulofuranose. In Thermotoga maritima (strain ATCC 43589 / DSM 3109 / JCM 10099 / NBRC 100826 / MSB8), this protein is Xylose isomerase.